Reading from the N-terminus, the 163-residue chain is Secretory-abundant heat soluble protein 53582 (163 aa).

A signal peptide spans 1-19; the sequence is MARLFVAVALFGVVAFAAA. Residues 22 to 51 form an SAHS-c1 region; the sequence is EWTGKTWLGSWASTDRAENWEAFVDALGLP. The SAHS-c2 stretch occupies residues 67 to 95; the sequence is YKQGDKYHHEVSIPSKNFKKAIEYTLGTE. Residues 108 to 157 form an SAHS-c3 region; that stretch reads KYTEDGEKLVADVQIPSKNKQIHDIYEVQGDTLTKTYKVGDVVAKRWFTR.

This sequence belongs to the Secretory-abundant heat soluble protein (SAHS) family.

The protein localises to the secreted. Its function is as follows. Secreted heat soluble protein acting as a molecular shield in water-deficient condition. Tardigrade-specific intrinsically disordered proteins (TDPs) are essential for desiccation tolerance by forming non-crystalline amorphous solids upon desiccation, and this vitrified state mirrors their protective capabilities. In Hypsibius exemplaris (Freshwater tardigrade), this protein is Secretory-abundant heat soluble protein 53582.